Consider the following 537-residue polypeptide: Tegument protein BRRF2 (537 aa).

Disordered regions lie at residues 321–366 (RPRF…AVPP), 378–398 (AKQNRGGMGSLHLAKPEETSP), 414–466 (SKQH…DEEF), and 486–537 (GLRV…LSVV). The span at 334-347 (EPQQTCSQLTSRGN) shows a compositional bias: polar residues. Over residues 423-441 (SSQAAPSFSSVAPVASLSG) the composition is skewed to low complexity. Residues 492-517 (DEDEDGSEDGEFSDLDLSDSDHEGDE) are compositionally biased toward acidic residues.

This sequence belongs to the lymphocryptovirus BRRF2 family.

The protein localises to the virion tegument. The protein is Tegument protein BRRF2 of Homo sapiens (Human).